The sequence spans 117 residues: Fluoride-specific ion channel FluC 2 (117 aa).

The next 4 membrane-spanning stretches (helical) occupy residues methionine 1–isoleucine 21, isoleucine 33–glycine 53, methionine 61–serine 81, and isoleucine 94–glycine 114. Na(+) contacts are provided by glycine 71 and threonine 74.

Belongs to the fluoride channel Fluc/FEX (TC 1.A.43) family.

It is found in the cell membrane. It catalyses the reaction fluoride(in) = fluoride(out). Its activity is regulated as follows. Na(+) is not transported, but it plays an essential structural role and its presence is essential for fluoride channel function. Functionally, fluoride-specific ion channel. Important for reducing fluoride concentration in the cell, thus reducing its toxicity. This Staphylococcus epidermidis (strain ATCC 35984 / DSM 28319 / BCRC 17069 / CCUG 31568 / BM 3577 / RP62A) protein is Fluoride-specific ion channel FluC 2.